Reading from the N-terminus, the 960-residue chain is Pentatricopeptide repeat-containing protein At3g63370, chloroplastic (960 aa).

A chloroplast-targeting transit peptide spans 1 to 64; it reads MEYAVTNMRL…PKLACFDGVL (64 aa). PPR repeat units lie at residues 79 to 109, 115 to 145, 146 to 180, 181 to 215, 216 to 246, 248 to 282, 283 to 317, 319 to 349, 350 to 384, 385 to 419, 420 to 450, 451 to 485, 486 to 516, 520 to 550, 551 to 585, 586 to 620, 621 to 651, 652 to 686, 687 to 717, and 723 to 753; these read PVEA…IFKT, LDFL…MPDR, TAFA…GVPL, GLSS…GYHS, TGFI…FQEK, DAVL…GPAP, NSYT…STHS, ELYV…MNNA, DVVT…GHKS, DEVS…GWDS, NLQV…MHDK, DLIS…RMEI, DEMI…ILRK, DTVI…IKGK, DVVS…GLSA, DSVA…GFCL, EGSI…IERK, GLLQ…NVSP, DHIS…MEHE, and WPEH…MKTE. The type E motif stretch occupies residues 758-833; it reads VWCALLAACR…HPGCSWIEMD (76 aa). Positions 834-864 are type E(+) motif; it reads GKVHKFTARDKSHPESKEIYEKLSEVTRKLE. A type DYW motif region spans residues 865-960; sequence REVGYVADTK…SGLCSCGDSW (96 aa).

The protein belongs to the PPR family. PCMP-H subfamily.

Its subcellular location is the plastid. It is found in the chloroplast. Involved in RNA editing event in chloroplasts. Required for the editing of a single site in rps14 transcript. In Arabidopsis thaliana (Mouse-ear cress), this protein is Pentatricopeptide repeat-containing protein At3g63370, chloroplastic (PCMP-H83).